A 279-amino-acid chain; its full sequence is Tumor necrosis factor ligand superfamily member 6 (279 aa).

Residues 1 to 78 lie on the Cytoplasmic side of the membrane; the sequence is MQQPMNYPCP…PLKKKDHNTN (78 aa). A disordered region spans residues 30-70; it reads FPCPSCGPRGPDQRRPPPPPPPVSPLPPPSQPLPLPPLTPL. The segment covering 45–68 has biased composition (pro residues); sequence PPPPPPPVSPLPPPSQPLPLPPLT. The chain crosses the membrane as a helical; Signal-anchor for type II membrane protein span at residues 79 to 100; sequence LWLPVVFFMVLVALVGMGLGMY. Residues 101-279 lie on the Extracellular side of the membrane; the sequence is QLFHLQKELA…SKTFFGLYKL (179 aa). N-linked (GlcNAc...) asparagine glycosylation is present at Asn-117. Over residues 126-135 the composition is skewed to polar residues; that stretch reads EKQIANPSTP. The segment at 126-150 is disordered; sequence EKQIANPSTPSEKKEPRSVAHLTGN. Positions 143–279 constitute a THD domain; that stretch reads SVAHLTGNPH…SKTFFGLYKL (137 aa). Asn-182 carries N-linked (GlcNAc...) asparagine glycosylation. Residues Cys-200 and Cys-231 are joined by a disulfide bond. N-linked (GlcNAc...) asparagine glycans are attached at residues Asn-248 and Asn-258.

It belongs to the tumor necrosis factor family. As to quaternary structure, homotrimer. Interacts with ARHGAP9, BAIAP2L1, BTK, CACNB3, CACNB4, CRK, DLG2, DNMBP, DOCK4, EPS8L3, FGR, FYB1, FYN, HCK, ITK, ITSN2, KALRN, LYN, MACC1, MIA, MPP4, MYO15A, NCF1, NCK1, NCK2, NCKIPSD, OSTF1, PIK3R1, PSTPIP1, RIMBP3C, SAMSN1, SH3GL3, SH3PXD2B, SH3PXD2A, SH3RF2, SKAP2, SNX33, SNX9, SORBS3, SPTA1, SRC, SRGAP1, SRGAP2, SRGAP3, TEC, TJP3 and YES1. Post-translationally, the soluble form derives from the membrane form by proteolytic processing. The membrane-bound form undergoes two successive intramembrane proteolytic cleavages. The first one is processed by ADAM10 producing an N-terminal fragment, which lacks the receptor-binding extracellular domain. This ADAM10-processed FasL (FAsL APL) remnant form is still membrane anchored and further processed by SPPL2A that liberates the FasL intracellular domain (FasL ICD). FasL shedding by ADAM10 is a prerequisite for subsequent intramembrane cleavage by SPPL2A in T-cells. In terms of processing, phosphorylated by FGR on tyrosine residues; this is required for ubiquitination and subsequent internalization. N-glycosylated. Glycosylation enhances apoptotic activity. Post-translationally, monoubiquitinated. In terms of tissue distribution, expressed in T-cells. Expressed in natural killer cells.

It is found in the cell membrane. Its subcellular location is the cytoplasmic vesicle lumen. The protein localises to the lysosome lumen. It localises to the secreted. The protein resides in the nucleus. Cytokine that binds to TNFRSF6/FAS, a receptor that transduces the apoptotic signal into cells. Involved in cytotoxic T-cell-mediated apoptosis, natural killer cell-mediated apoptosis and in T-cell development. Initiates fratricidal/suicidal activation-induced cell death (AICD) in antigen-activated T-cells contributing to the termination of immune responses. TNFRSF6/FAS-mediated apoptosis also has a role in the induction of peripheral tolerance. Binds to TNFRSF6B/DcR3, a decoy receptor that blocks apoptosis. Functionally, induces FAS-mediated activation of NF-kappa-B, initiating non-apoptotic signaling pathways. Can induce apoptosis but does not appear to be essential for this process. Its function is as follows. Cytoplasmic form induces gene transcription inhibition. The polypeptide is Tumor necrosis factor ligand superfamily member 6 (Faslg) (Mus musculus (Mouse)).